We begin with the raw amino-acid sequence, 197 residues long: MFERELEALGFEKTGDLIKIVPPDLFAELCQQSVQHLQRQRSGVDCHAIFQSFQAVGVHISEDELRKIIRGMTALFSTAAKYNVTCEELLSMLISKLPKQILQVIRHVWNEEGKHLCELQKSRDLLPSGELVDFHWKIGMAVSSDSCRSLNHPYVTVELKVADYSGQITSKILELTIPEFKNFHKQFKEMSAVLETV.

The region spanning 130–197 is the COMM domain; the sequence is ELVDFHWKIG…KEMSAVLETV (68 aa).

Belongs to the COMM domain-containing protein 6 family. Component of the commander complex consisting of the CCC subcomplex and the retriever subcomplex. Component of the CCC subcomplex.

The protein localises to the nucleus. The protein resides in the cytoplasm. Its function is as follows. Scaffold protein in the commander complex that is essential for endosomal recycling of transmembrane cargos; the commander complex is composed of the CCC subcomplex and the retriever subcomplex. May modulate activity of cullin-RING E3 ubiquitin ligase (CRL) complexes. Down-regulates activation of NF-kappa-B. Inhibits TNF-induced NFKB1 activation. The polypeptide is COMM domain-containing protein 6 (commd6) (Xenopus laevis (African clawed frog)).